The chain runs to 157 residues: Transcriptional repressor NrdR (157 aa).

The disordered stretch occupies residues 1-22 (MRCPKCGATKSSVIDSRQAEEG). Residues 3 to 34 (CPKCGATKSSVIDSRQAEEGNTIRRRRECDEC) fold into a zinc finger. An ATP-cone domain is found at 49–139 (LVVVKKDGTR…VYRSFKDVSE (91 aa)).

The protein belongs to the NrdR family. Zn(2+) serves as cofactor.

Functionally, negatively regulates transcription of bacterial ribonucleotide reductase nrd genes and operons by binding to NrdR-boxes. This is Transcriptional repressor NrdR from Streptococcus pneumoniae (strain Hungary19A-6).